Here is a 584-residue protein sequence, read N- to C-terminus: MGIHIPYLTSKTSQSNVGDAVGNADSVEFNSEHDSPSKRGKITLESHEIQRAPASDDEDRIQIKPVNDEDDTSVMITFNQSLSPFIITLTFVASISGFMFGYDTGYISSALISIGTDLDHKVLTYGEKEIVTAATSLGALITSIFAGTAADIFGRKRCLMGSNLMFVIGAILQVSAHTFWQMAVGRLIMGFGVGIGSLIAPLFISEIAPKMIRGRLTVINSLWLTGGQLVAYGCGAGLNYVNNGWRILVGLSLIPTAVQFTCLCFLPDTPRYYVMKGDLARATEVLKRSYTDTSEEIIERKVEELVTLNQSIPGKNVPEKVWNTIKELHTVPSNLRALIIGCGLQAIQQFTGWNSLMYFSGTIFETVGFKNSSAVSIIVSGTNFIFTLVAFFSIDKIGRRTILLIGLPGMTMALVVCSIAFHFLGIKFDGAVAVVVSSGFSSWGIVIIVFIIVFAAFYALGIGTVPWQQSELFPQNVRGIGTSYATATNWAGSLVIASTFLTMLQNITPAGTFAFFAGLSCLSTIFCYFCYPELSGLELEEVQTILKDGFNIKASKALAKKRKQQVARVHELKYEPTQEIIEDI.

At 1–81 (MGIHIPYLTS…TSVMITFNQS (81 aa)) the chain is on the cytoplasmic side. Thr-12 bears the Phosphothreonine mark. Positions 13–42 (SQSNVGDAVGNADSVEFNSEHDSPSKRGKI) are disordered. Phosphoserine is present on residues Ser-26, Ser-31, Ser-35, Ser-37, and Ser-46. Positions 30–42 (NSEHDSPSKRGKI) are enriched in basic and acidic residues. A helical transmembrane segment spans residues 82 to 102 (LSPFIITLTFVASISGFMFGY). Residues 103-129 (DTGYISSALISIGTDLDHKVLTYGEKE) lie on the Extracellular side of the membrane. A helical transmembrane segment spans residues 130–150 (IVTAATSLGALITSIFAGTAA). The Cytoplasmic portion of the chain corresponds to 151 to 163 (DIFGRKRCLMGSN). Residues 164 to 184 (LMFVIGAILQVSAHTFWQMAV) traverse the membrane as a helical segment. The Extracellular portion of the chain corresponds to 185 to 186 (GR). Residues 187–207 (LIMGFGVGIGSLIAPLFISEI) traverse the membrane as a helical segment. Residues 208-215 (APKMIRGR) are Cytoplasmic-facing. A helical membrane pass occupies residues 216–236 (LTVINSLWLTGGQLVAYGCGA). Over 237-246 (GLNYVNNGWR) the chain is Extracellular. The helical transmembrane segment at 247–267 (ILVGLSLIPTAVQFTCLCFLP) threads the bilayer. Residues 268 to 349 (DTPRYYVMKG…IGCGLQAIQQ (82 aa)) lie on the Cytoplasmic side of the membrane. A helical membrane pass occupies residues 350-370 (FTGWNSLMYFSGTIFETVGFK). Asn-371 carries N-linked (GlcNAc...) asparagine glycosylation. Residues 371 to 376 (NSSAVS) are Extracellular-facing. Residues 377-397 (IIVSGTNFIFTLVAFFSIDKI) form a helical membrane-spanning segment. Residues 398-400 (GRR) lie on the Cytoplasmic side of the membrane. The helical transmembrane segment at 401 to 421 (TILLIGLPGMTMALVVCSIAF) threads the bilayer. Residues 422 to 441 (HFLGIKFDGAVAVVVSSGFS) are Extracellular-facing. Residues 442-462 (SWGIVIIVFIIVFAAFYALGI) traverse the membrane as a helical segment. The Cytoplasmic segment spans residues 463–486 (GTVPWQQSELFPQNVRGIGTSYAT). Residues 487–507 (ATNWAGSLVIASTFLTMLQNI) traverse the membrane as a helical segment. The Extracellular portion of the chain corresponds to 508–510 (TPA). A helical transmembrane segment spans residues 511–531 (GTFAFFAGLSCLSTIFCYFCY). Over 532–584 (PELSGLELEEVQTILKDGFNIKASKALAKKRKQQVARVHELKYEPTQEIIEDI) the chain is Cytoplasmic. Lys-573 is covalently cross-linked (Glycyl lysine isopeptide (Lys-Gly) (interchain with G-Cter in ubiquitin)).

The protein belongs to the major facilitator superfamily. Sugar transporter (TC 2.A.1.1) family.

It is found in the cell membrane. It catalyses the reaction myo-inositol(out) + H(+)(out) = myo-inositol(in) + H(+)(in). In terms of biological role, major transporter for myo-inositol. The chain is Myo-inositol transporter 1 (ITR1) from Saccharomyces cerevisiae (strain ATCC 204508 / S288c) (Baker's yeast).